The chain runs to 605 residues: Class II receptor tyrosine kinase (605 aa).

In terms of domain architecture, Ig-like C2-type spans 1-67 (MWSSPGRNLE…DGESASFRVD (67 aa)). The Extracellular portion of the chain corresponds to 1 to 84 (MWSSPGRNLE…GSNSGVIAGV (84 aa)). N-linked (GlcNAc...) asparagine glycans are attached at residues N26, N44, and N72. A helical transmembrane segment spans residues 85-105 (LITLLLLIALIIILICVFWVV). Residues 106–605 (WRYRRRGKFD…GRPRGVAGCV (500 aa)) are Cytoplasmic-facing. A disordered region spans residues 209 to 230 (EELSPIQEKPTRRNTGLSTYSQ). Polar residues predominate over residues 221–230 (RNTGLSTYSQ). Residues 346 to 605 (IREVKQIGVG…GRPRGVAGCV (260 aa)) form the Protein kinase domain. ATP-binding positions include 352 to 360 (IGVGQFGAV) and K393. Catalysis depends on D496, which acts as the Proton acceptor. Position 527 is a phosphotyrosine; by autocatalysis (Y527).

This sequence belongs to the protein kinase superfamily. Tyr protein kinase family. Insulin receptor subfamily. Phosphorylated.

The protein resides in the cell membrane. The catalysed reaction is L-tyrosyl-[protein] + ATP = O-phospho-L-tyrosyl-[protein] + ADP + H(+). This is Class II receptor tyrosine kinase (TK) from Geodia cydonium (Sponge).